The sequence spans 525 residues: G-protein regulator 2 (525 aa).

The region spanning 424–445 is the GoLoco domain; the sequence is PVDMMDLIFSMSSRMDDQRTEL. Positions 489-525 are disordered; sequence TMNRILKRSKKSKSSLDSTNSIQGDDTRSDDVTMTSK.

As to quaternary structure, interacts with gpr-1; gpr-1 forms a complex with lin-5 and GDP-bound goa-1.

It is found in the cytoplasm. The protein resides in the cell cortex. The protein localises to the cytoskeleton. It localises to the spindle. Its function is as follows. In the 1-cell embryo, probably together with gpr-1, controls nuclear rotation and spindle elongation during mitosis. Complex of gpr-1 and gpr-2, in association with lin-5, activates G-protein signaling to affect mitotic spindle force. Polarity determinants (par genes) may regulate lin-5/gpr-1/gpr-2/goa-1 locally to create the asymmetric forces that drive spindle movement. This chain is G-protein regulator 2 (gpr-2), found in Caenorhabditis elegans.